A 263-amino-acid chain; its full sequence is 3-methyl-2-oxobutanoate hydroxymethyltransferase (263 aa).

Positions 46 and 85 each coordinate Mg(2+). Residues 46–47, Asp85, and Lys115 contribute to the 3-methyl-2-oxobutanoate site; that span reads DS. Glu117 contributes to the Mg(2+) binding site. Glu180 functions as the Proton acceptor in the catalytic mechanism.

This sequence belongs to the PanB family. As to quaternary structure, homodecamer; pentamer of dimers. Mg(2+) is required as a cofactor.

It is found in the cytoplasm. The enzyme catalyses 3-methyl-2-oxobutanoate + (6R)-5,10-methylene-5,6,7,8-tetrahydrofolate + H2O = 2-dehydropantoate + (6S)-5,6,7,8-tetrahydrofolate. It participates in cofactor biosynthesis; (R)-pantothenate biosynthesis; (R)-pantoate from 3-methyl-2-oxobutanoate: step 1/2. Functionally, catalyzes the reversible reaction in which hydroxymethyl group from 5,10-methylenetetrahydrofolate is transferred onto alpha-ketoisovalerate to form ketopantoate. This is 3-methyl-2-oxobutanoate hydroxymethyltransferase from Corynebacterium diphtheriae (strain ATCC 700971 / NCTC 13129 / Biotype gravis).